The primary structure comprises 89 residues: Large ribosomal subunit protein bL27 (89 aa).

Positions 1-21 (MAHKKAGGSSRNGRDSAGRRL) are disordered.

Belongs to the bacterial ribosomal protein bL27 family.

The chain is Large ribosomal subunit protein bL27 from Roseobacter denitrificans (strain ATCC 33942 / OCh 114) (Erythrobacter sp. (strain OCh 114)).